A 509-amino-acid polypeptide reads, in one-letter code: MDPLCTASSGPRKKRPRQVGASMASPPHDIKFQNLVLFILEKKMGTTRRNFLMELARRKGFRVENELSDSVTHIVAENNSGSEVLEWLQVQNIRASSQLELLDVSWLIESMGAGKPVEITGKHQLVVRTDYSATPNPGFQKTPPLAVKKISQYACQRKTTLNNYNHIFTDAFEILAENSEFKENEVSYVTFMRAASVLKSLPFTIISMKDTEGIPCLGDKVKCIIEEIIEDGESSEVKAVLNDERYQSFKLFTSVFGVGLKTSEKWFRMGFRSLSKIMSDKTLKFTKMQKAGFLYYEDLVSCVTRAEAEAVGVLVKEAVWAFLPDAFVTMTGGFRRGKKIGHDVDFLITSPGSAEDEEQLLPKVINLWEKKGLLLYYDLVESTFEKFKLPSRQVDTLDHFQKCFLILKLHHQRVDSSKSNQQEGKTWKAIRVDLVMCPYENRAFALLGWTGSRQFERDIRRYATHERKMMLDNHALYDKTKRVFLKAESEEEIFAHLGLDYIEPWERNA.

Residues 1–25 (MDPLCTASSGPRKKRPRQVGASMAS) form a disordered region. The Nuclear localization signal motif lies at 11–17 (PRKKRPR). One can recognise a BRCT domain in the interval 27 to 124 (PHDIKFQNLV…KPVEITGKHQ (98 aa)). The mediates interaction with DNTTIP2 stretch occupies residues 151 to 509 (SQYACQRKTT…DYIEPWERNA (359 aa)). Positions 258 to 262 (VGLKT) are involved in DNA binding. A 2'-deoxyribonucleoside 5'-triphosphate-binding positions include 333 to 338 (GFRRGK) and 342 to 345 (HDVD). Residues D343, D345, and D433 each contribute to the Mg(2+) site. Residue 448–449 (GW) participates in a 2'-deoxyribonucleoside 5'-triphosphate binding.

This sequence belongs to the DNA polymerase type-X family. Interacts with PRP19 and DNTTIP1. Forms a ternary complex with DNTTIP2 and core histone. Released from this complex by PCNA. Interacts with TRERF1. Mg(2+) serves as cofactor.

Its subcellular location is the nucleus. It catalyses the reaction DNA(n) + a 2'-deoxyribonucleoside 5'-triphosphate = DNA(n+1) + diphosphate. Its function is as follows. Template-independent DNA polymerase which catalyzes the random addition of deoxynucleoside 5'-triphosphate to the 3'-end of a DNA initiator. One of the in vivo functions of this enzyme is the addition of nucleotides at the junction (N region) of rearranged Ig heavy chain and T-cell receptor gene segments during the maturation of B- and T-cells. This chain is DNA nucleotidylexotransferase (DNTT), found in Bos taurus (Bovine).